We begin with the raw amino-acid sequence, 69 residues long: Cytochrome c oxidase subunit 8A, mitochondrial (69 aa).

The transit peptide at 1–25 (MSVLTPLLLRGLTGSARRLPVPRAK) directs the protein to the mitochondrion. Residues 2–19 (SVLTPLLLRGLTGSARRL) carry the SIFI-degron motif. The Mitochondrial matrix portion of the chain corresponds to 26–36 (IHSLPPEEKLG). The helical transmembrane segment at 37–60 (IMELAVGLTSCFVTFLLPAGWILS) threads the bilayer. Residues 61 to 69 (HLETYRRPE) lie on the Mitochondrial intermembrane side of the membrane.

This sequence belongs to the cytochrome c oxidase VIII family. In terms of assembly, component of the cytochrome c oxidase (complex IV, CIV), a multisubunit enzyme composed of 14 subunits. The complex is composed of a catalytic core of 3 subunits MT-CO1, MT-CO2 and MT-CO3, encoded in the mitochondrial DNA, and 11 supernumerary subunits COX4I, COX5A, COX5B, COX6A, COX6B, COX6C, COX7A, COX7B, COX7C, COX8 and NDUFA4, which are encoded in the nuclear genome. The complex exists as a monomer or a dimer and forms supercomplexes (SCs) in the inner mitochondrial membrane with NADH-ubiquinone oxidoreductase (complex I, CI) and ubiquinol-cytochrome c oxidoreductase (cytochrome b-c1 complex, complex III, CIII), resulting in different assemblies (supercomplex SCI(1)III(2)IV(1) and megacomplex MCI(2)III(2)IV(2)). In terms of processing, in response to mitochondrial stress, the precursor protein is ubiquitinated by the SIFI complex in the cytoplasm before mitochondrial import, leading to its degradation. Within the SIFI complex, UBR4 initiates ubiquitin chain that are further elongated or branched by KCMF1.

The protein resides in the mitochondrion inner membrane. It functions in the pathway energy metabolism; oxidative phosphorylation. Functionally, component of the cytochrome c oxidase, the last enzyme in the mitochondrial electron transport chain which drives oxidative phosphorylation. The respiratory chain contains 3 multisubunit complexes succinate dehydrogenase (complex II, CII), ubiquinol-cytochrome c oxidoreductase (cytochrome b-c1 complex, complex III, CIII) and cytochrome c oxidase (complex IV, CIV), that cooperate to transfer electrons derived from NADH and succinate to molecular oxygen, creating an electrochemical gradient over the inner membrane that drives transmembrane transport and the ATP synthase. Cytochrome c oxidase is the component of the respiratory chain that catalyzes the reduction of oxygen to water. Electrons originating from reduced cytochrome c in the intermembrane space (IMS) are transferred via the dinuclear copper A center (CU(A)) of subunit 2 and heme A of subunit 1 to the active site in subunit 1, a binuclear center (BNC) formed by heme A3 and copper B (CU(B)). The BNC reduces molecular oxygen to 2 water molecules using 4 electrons from cytochrome c in the IMS and 4 protons from the mitochondrial matrix. This is Cytochrome c oxidase subunit 8A, mitochondrial (COX8A) from Hylobates agilis (Agile gibbon).